The primary structure comprises 165 residues: Phosphopantetheine adenylyltransferase (165 aa).

Threonine 10 serves as a coordination point for substrate. ATP-binding positions include 10–11 and histidine 18; that span reads TF. Substrate contacts are provided by lysine 42, leucine 75, and arginine 89. Residues 90–92, glutamate 100, and 125–131 contribute to the ATP site; these read GLR and YTYVASS.

This sequence belongs to the bacterial CoaD family. Homohexamer. The cofactor is Mg(2+).

It is found in the cytoplasm. The catalysed reaction is (R)-4'-phosphopantetheine + ATP + H(+) = 3'-dephospho-CoA + diphosphate. It functions in the pathway cofactor biosynthesis; coenzyme A biosynthesis; CoA from (R)-pantothenate: step 4/5. Functionally, reversibly transfers an adenylyl group from ATP to 4'-phosphopantetheine, yielding dephospho-CoA (dPCoA) and pyrophosphate. The protein is Phosphopantetheine adenylyltransferase of Chlorobium phaeobacteroides (strain BS1).